The chain runs to 226 residues: tRNA (guanine-N(1)-)-methyltransferase (226 aa).

S-adenosyl-L-methionine-binding positions include Gly112 and 132–137 (IGDYVL).

The protein belongs to the RNA methyltransferase TrmD family. In terms of assembly, homodimer.

The protein resides in the cytoplasm. It catalyses the reaction guanosine(37) in tRNA + S-adenosyl-L-methionine = N(1)-methylguanosine(37) in tRNA + S-adenosyl-L-homocysteine + H(+). Its function is as follows. Specifically methylates guanosine-37 in various tRNAs. The protein is tRNA (guanine-N(1)-)-methyltransferase of Flavobacterium johnsoniae (strain ATCC 17061 / DSM 2064 / JCM 8514 / BCRC 14874 / CCUG 350202 / NBRC 14942 / NCIMB 11054 / UW101) (Cytophaga johnsonae).